We begin with the raw amino-acid sequence, 356 residues long: Phosphoribosylformylglycinamidine cyclo-ligase (356 aa).

This sequence belongs to the AIR synthase family.

The protein resides in the cytoplasm. The enzyme catalyses 2-formamido-N(1)-(5-O-phospho-beta-D-ribosyl)acetamidine + ATP = 5-amino-1-(5-phospho-beta-D-ribosyl)imidazole + ADP + phosphate + H(+). It functions in the pathway purine metabolism; IMP biosynthesis via de novo pathway; 5-amino-1-(5-phospho-D-ribosyl)imidazole from N(2)-formyl-N(1)-(5-phospho-D-ribosyl)glycinamide: step 2/2. The sequence is that of Phosphoribosylformylglycinamidine cyclo-ligase from Nitrobacter hamburgensis (strain DSM 10229 / NCIMB 13809 / X14).